The sequence spans 99 residues: Nucleoid-associated protein SEQ_0368 (99 aa).

It belongs to the YbaB/EbfC family. Homodimer.

The protein resides in the cytoplasm. Its subcellular location is the nucleoid. In terms of biological role, binds to DNA and alters its conformation. May be involved in regulation of gene expression, nucleoid organization and DNA protection. The protein is Nucleoid-associated protein SEQ_0368 of Streptococcus equi subsp. equi (strain 4047).